The following is a 414-amino-acid chain: 5-aminolevulinate synthase (414 aa).

The substrate site is built by Arg22, Ser133, and Lys152. 3 residues coordinate pyridoxal 5'-phosphate: Ser185, His213, and Thr241. Lys244 is an active-site residue. Lys244 carries the N6-(pyridoxal phosphate)lysine modification. 2 residues coordinate pyridoxal 5'-phosphate: Thr273 and Thr274. A substrate-binding site is contributed by Thr359.

The protein belongs to the class-II pyridoxal-phosphate-dependent aminotransferase family. Homodimer. Pyridoxal 5'-phosphate serves as cofactor.

The enzyme catalyses succinyl-CoA + glycine + H(+) = 5-aminolevulinate + CO2 + CoA. The protein operates within porphyrin-containing compound metabolism; protoporphyrin-IX biosynthesis; 5-aminolevulinate from glycine: step 1/1. This Rickettsia prowazekii (strain Madrid E) protein is 5-aminolevulinate synthase (hemA).